The sequence spans 100 residues: uncharacterized protein (100 aa).

Belongs to the ycf15 family.

The protein localises to the plastid. The protein resides in the chloroplast. This is an uncharacterized protein from Panax ginseng (Korean ginseng).